A 410-amino-acid polypeptide reads, in one-letter code: Putative competence-damage inducible protein (410 aa).

It belongs to the CinA family.

The polypeptide is Putative competence-damage inducible protein (Clostridium beijerinckii (strain ATCC 51743 / NCIMB 8052) (Clostridium acetobutylicum)).